The chain runs to 128 residues: Large ribosomal subunit protein bL17 (128 aa).

Belongs to the bacterial ribosomal protein bL17 family. In terms of assembly, part of the 50S ribosomal subunit. Contacts protein L32.

This Streptococcus pyogenes serotype M5 (strain Manfredo) protein is Large ribosomal subunit protein bL17.